A 190-amino-acid chain; its full sequence is Potassium-transporting ATPase KdpC subunit (190 aa).

Residues 10-30 (TFIFLLLITGGVYPLLTTALG) traverse the membrane as a helical segment.

It belongs to the KdpC family. In terms of assembly, the system is composed of three essential subunits: KdpA, KdpB and KdpC.

It localises to the cell inner membrane. In terms of biological role, part of the high-affinity ATP-driven potassium transport (or Kdp) system, which catalyzes the hydrolysis of ATP coupled with the electrogenic transport of potassium into the cytoplasm. This subunit acts as a catalytic chaperone that increases the ATP-binding affinity of the ATP-hydrolyzing subunit KdpB by the formation of a transient KdpB/KdpC/ATP ternary complex. The polypeptide is Potassium-transporting ATPase KdpC subunit (Escherichia coli O9:H4 (strain HS)).